The primary structure comprises 313 residues: MGLKGFAEGGIASIVAGCSTHPLDLIKVRMQLQGESAPIQTNLRPALAFQTSTTVNAPPLRVGVIGVGSRLIREEGMRALFSGVSATVLRQTLYSTTRMGLYDIIKGEWTDPETKTMPLMKKIGAGAIAGAIGAAVGNPADVAMVRMQADGRLPLTDRRNYKSVLDAITQMIRGEGVTSLWRGSSLTINRAMLVTSSQLASYDSVKETILEKGLLKDGLGTHVSASFAAGFVASVASNPVDVIKTRVMNMKVVAGVAPPYKGAVDCALKTVKAEGIMSLYKGFIPTVSRQAPFTVVLFVTLEQVKKLFKDYDF.

3 Solcar repeats span residues 4–108, 117–208, and 217–307; these read KGFA…IKGE, MPLM…VKET, and DGLG…VKKL. Helical transmembrane passes span 6–26, 77–97, 123–143, 182–202, 223–243, and 280–300; these read FAEG…LDLI, MRAL…YSTT, IGAG…ADVA, RGSS…LASY, VSAS…VDVI, and YKGF…LFVT.

The protein belongs to the mitochondrial carrier (TC 2.A.29) family. Expressed in roots, leaves, stems and flowers.

It is found in the mitochondrion inner membrane. In terms of biological role, PUMPS are mitochondrial transporter proteins that create proton leaks across the inner mitochondrial membrane, thus uncoupling oxidative phosphorylation. This leads to a decrease in the efficiency of oxidative phosphorylation and an increase in heat production. May be involved in protecting plant cells against oxidative stress damage. Recombinant PUMP5, reconstituted into liposomes, transports a wide range of dicarboxylic acids including malate, oxaloacetate and succinate as well as phosphate, sulfate and thiosulfate. However, it is unknown if these transports are of any biological significance in vivo. The polypeptide is Mitochondrial uncoupling protein 5 (PUMP5) (Arabidopsis thaliana (Mouse-ear cress)).